A 127-amino-acid polypeptide reads, in one-letter code: Fluoride-specific ion channel FluC (127 aa).

The next 4 membrane-spanning stretches (helical) occupy residues 1-21 (MPQG…GACL), 39-59 (FGTL…YGVI), 72-92 (LIGV…VETL), and 105-125 (ANVF…IELM). Residues Gly79 and Thr82 each coordinate Na(+).

Belongs to the fluoride channel Fluc/FEX (TC 1.A.43) family.

It is found in the cell inner membrane. The catalysed reaction is fluoride(in) = fluoride(out). With respect to regulation, na(+) is not transported, but it plays an essential structural role and its presence is essential for fluoride channel function. In terms of biological role, fluoride-specific ion channel. Important for reducing fluoride concentration in the cell, thus reducing its toxicity. The chain is Fluoride-specific ion channel FluC from Alteromonas mediterranea (strain DSM 17117 / CIP 110805 / LMG 28347 / Deep ecotype).